The primary structure comprises 594 residues: Solute carrier family 13 member 1 (594 aa).

5 helical membrane passes run 13–33 (FLLV…IRTK), 40–60 (ILFV…ITAL), 77–97 (VASA…CLAT), 113–133 (VMMV…STAF), and 134–154 (LSMW…VEAV). An N-linked (GlcNAc...) asparagine glycan is attached at Asn-174. Over residues 192–220 (TNEKKEKTKPAPGSSHDKGKVSRKMETEK) the composition is skewed to basic and acidic residues. The interval 192–226 (TNEKKEKTKPAPGSSHDKGKVSRKMETEKNAVTGA) is disordered. The next 8 helical transmembrane spans lie at 239-259 (LMCL…ITGT), 283-303 (SWFL…WIWL), 347-367 (IVTL…DPGF), 380-400 (GYVT…LIPA), 461-481 (LSPL…LIVT), 487-507 (ASNP…AEAI), 511-531 (PLQI…LPVA), and 552-572 (AGLG…FTWI). N-linked (GlcNAc...) asparagine glycosylation is present at Asn-590.

It belongs to the SLC13A/DASS transporter (TC 2.A.47) family. NADC subfamily. Highly expressed in kidney and ileum, detected at lower levels in duodenum/jejunum and colon, and at very low levels in cecum, testis, adrenal and adipose tissues. As to expression, expressed in the kidney.

The protein localises to the apical cell membrane. It catalyses the reaction sulfate(out) + 3 Na(+)(out) = sulfate(in) + 3 Na(+)(in). The enzyme catalyses selenate(out) + 3 Na(+)(out) = selenate(in) + 3 Na(+)(in). The catalysed reaction is thiosulfate(out) + 3 Na(+)(out) = thiosulfate(in) + 3 Na(+)(in). Sodium:sulfate symporter that mediates sulfate reabsorption in the kidney and small intestine. Can also mediate the transport of selenate and thiosulfate. This Mus musculus (Mouse) protein is Solute carrier family 13 member 1 (Slc13a1).